Reading from the N-terminus, the 658-residue chain is Structure-specific endonuclease subunit SLX1 (658 aa).

The GIY-YIG domain maps to 12–92 (PFYACYFLRS…AKPHLSRHLK (81 aa)). Disordered regions lie at residues 29-52 (YIGSTPAPPRRKRQHNGHLTQGAY), 239-269 (GVAEHPVKKRQTSSRQKPHTEETSAWPETLP), 288-328 (PIPQ…NGVD), and 594-658 (TTSR…IDLT). Composition is skewed to basic and acidic residues over residues 308–324 (KLSDKARPSALEDHDAE) and 627–640 (SKIDGDGAGKDTKK). Residues 641-652 (NTTQKAKSNETS) show a composition bias toward polar residues.

This sequence belongs to the SLX1 family. In terms of assembly, forms a heterodimer with SLX4. A divalent metal cation is required as a cofactor.

The protein resides in the nucleus. In terms of biological role, catalytic subunit of the SLX1-SLX4 structure-specific endonuclease that resolves DNA secondary structures generated during DNA repair and recombination. Has endonuclease activity towards branched DNA substrates, introducing single-strand cuts in duplex DNA close to junctions with ss-DNA. In Mycosarcoma maydis (Corn smut fungus), this protein is Structure-specific endonuclease subunit SLX1.